A 249-amino-acid polypeptide reads, in one-letter code: Probable transglycosylase SceD 2 (249 aa).

The signal sequence occupies residues 1–27 (MKKTVIASTLAVGLGVTGIAAGNSADA). 2 stretches are compositionally biased toward low complexity: residues 80-95 (WSYG…ASSE) and 103-171 (QQTA…SSSS). Residues 80 to 203 (WSYGEGSGEG…PSSGASGKFQ (124 aa)) form a disordered region. 2 stretches are compositionally biased toward polar residues: residues 172-182 (GVNAHLQQIAQ) and 192-203 (TNPSSGASGKFQ).

Belongs to the transglycosylase family. SceD subfamily.

It localises to the secreted. Its function is as follows. Is able to cleave peptidoglycan and affects clumping and separation of bacterial cells. This is Probable transglycosylase SceD 2 (sceD2) from Staphylococcus saprophyticus subsp. saprophyticus (strain ATCC 15305 / DSM 20229 / NCIMB 8711 / NCTC 7292 / S-41).